A 386-amino-acid chain; its full sequence is Protein phosphatase methylesterase 1 (386 aa).

Positions 1-38 (MSALEKSMHLGRLPSRPPLPGSGGSQSGAKMRMGPGRK) are disordered. Ser-15 carries the post-translational modification Phosphoserine. Arg-16 is subject to Asymmetric dimethylarginine; alternate. The residue at position 16 (Arg-16) is an Omega-N-methylarginine; alternate. The residue at position 42 (Ser-42) is a Phosphoserine. Ser-156 is a catalytic residue. Acidic residues predominate over residues 254-265 (IIEEEEEDEEGS). A disordered region spans residues 254-280 (IIEEEEEDEEGSESISKRKKEDDMETK). The segment covering 268 to 280 (ISKRKKEDDMETK) has biased composition (basic and acidic residues). The active site involves His-349.

It belongs to the AB hydrolase superfamily. As to quaternary structure, binds PPP2CA and PPP2CB. Phosphorylated by SIK1 following increases in intracellular sodium, leading to dissociation from the protein phosphatase 2A (PP2A) complex and subsequent dephosphorylation of sodium/potassium-transporting ATPase ATP1A1.

It catalyses the reaction [phosphatase 2A protein]-C-terminal L-leucine methyl ester + H2O = [phosphatase 2A protein]-C-terminal L-leucine + methanol + H(+). Its function is as follows. Demethylates proteins that have been reversibly carboxymethylated. Demethylates PPP2CB (in vitro) and PPP2CA. Binding to PPP2CA displaces the manganese ion and inactivates the enzyme. This chain is Protein phosphatase methylesterase 1 (PPME1), found in Pongo abelii (Sumatran orangutan).